A 20-amino-acid polypeptide reads, in one-letter code: Hemocyanin subunit II (20 aa).

Residues 1-20 (DVVASSTAHKQQDINHLLDK) are disordered. Residues 10-20 (KQQDINHLLDK) are compositionally biased toward basic and acidic residues.

The protein belongs to the tyrosinase family. Hemocyanin subfamily. In terms of assembly, composed of 3 major subunits (IB, II and III) and 1 minor subunit (IA) which form homohexamers and heterohexamers. May also form larger structures. As to expression, hemolymph.

The protein resides in the secreted. It is found in the extracellular space. Hemocyanins are copper-containing oxygen carriers occurring freely dissolved in the hemolymph of many mollusks and arthropods. This Panulirus japonicus (Japanese spiny lobster) protein is Hemocyanin subunit II.